The following is a 100-amino-acid chain: Urease subunit gamma (100 aa).

It belongs to the urease gamma subunit family. In terms of assembly, heterotrimer of UreA (gamma), UreB (beta) and UreC (alpha) subunits. Three heterotrimers associate to form the active enzyme.

The protein resides in the cytoplasm. It carries out the reaction urea + 2 H2O + H(+) = hydrogencarbonate + 2 NH4(+). It functions in the pathway nitrogen metabolism; urea degradation; CO(2) and NH(3) from urea (urease route): step 1/1. The polypeptide is Urease subunit gamma (Cereibacter sphaeroides (strain ATCC 17025 / ATH 2.4.3) (Rhodobacter sphaeroides)).